The sequence spans 435 residues: NADH-quinone oxidoreductase subunit D (435 aa).

This sequence belongs to the complex I 49 kDa subunit family. In terms of assembly, NDH-1 is composed of 14 different subunits. Subunits NuoB, C, D, E, F, and G constitute the peripheral sector of the complex.

Its subcellular location is the cell inner membrane. It catalyses the reaction a quinone + NADH + 5 H(+)(in) = a quinol + NAD(+) + 4 H(+)(out). Functionally, NDH-1 shuttles electrons from NADH, via FMN and iron-sulfur (Fe-S) centers, to quinones in the respiratory chain. The immediate electron acceptor for the enzyme in this species is believed to be ubiquinone. Couples the redox reaction to proton translocation (for every two electrons transferred, four hydrogen ions are translocated across the cytoplasmic membrane), and thus conserves the redox energy in a proton gradient. The sequence is that of NADH-quinone oxidoreductase subunit D from Xanthomonas euvesicatoria pv. vesicatoria (strain 85-10) (Xanthomonas campestris pv. vesicatoria).